The sequence spans 261 residues: Thioredoxin-like protein HCF164, chloroplastic (261 aa).

The N-terminal 40 residues, 1–40, are a transit peptide targeting the chloroplast; sequence MARLVFSLNLPSSHGFNLSPRNLQSFFVTQTGAPRFRAVR. Residues 39–91 are disordered; the sequence is VRCKPNPESSETKQEKLVIDNGETSSASKEVESSSSVADSSSSSSSGFPESPN. Residues 63–84 show a composition bias toward low complexity; sequence SSASKEVESSSSVADSSSSSSS. The 129-residue stretch at 101–229 folds into the Thioredoxin domain; that stretch reads VTVIAALSLF…LVENVNALAA (129 aa). Catalysis depends on nucleophile residues cysteine 150 and cysteine 153. Cysteine 150 and cysteine 153 form a disulfide bridge.

This sequence belongs to the thioredoxin family. Interacts in vitro with LTO1.

Its subcellular location is the plastid. It is found in the chloroplast thylakoid membrane. Thiol-disulfide oxidoreductase that participates in various redox reactions in the chloroplast. Mediates the reduction of PSI-N in the thylakoid lumen. May interact and probably reduce other target proteins of the thylakoid membrane, such as FTSH2, FTSH8, LHCB5, atpA, atpB, atpE, petA and petC. Involved in the biogenesis of the plastid cytochrome b6f complex. Reducing equivalents are provided by stromal M-type thioredoxins and probably transduced through the thylakoid membrane by CCDA. Possesses low insulin disulfide bonds reducing activity. This is Thioredoxin-like protein HCF164, chloroplastic from Arabidopsis thaliana (Mouse-ear cress).